The chain runs to 65 residues: Large ribosomal subunit protein bL35 (65 aa).

It belongs to the bacterial ribosomal protein bL35 family.

The sequence is that of Large ribosomal subunit protein bL35 from Chromobacterium violaceum (strain ATCC 12472 / DSM 30191 / JCM 1249 / CCUG 213 / NBRC 12614 / NCIMB 9131 / NCTC 9757 / MK).